A 347-amino-acid polypeptide reads, in one-letter code: Selenide, water dikinase (347 aa).

Cysteine 17 is a catalytic residue. ATP is bound by residues lysine 20 and 48 to 50; that span reads TRD. Aspartate 51 is a Mg(2+) binding site. ATP contacts are provided by residues aspartate 68, aspartate 91, and 139–141; that span reads GHS. Aspartate 91 is a binding site for Mg(2+). Residue aspartate 227 coordinates Mg(2+).

It belongs to the selenophosphate synthase 1 family. Class I subfamily. As to quaternary structure, homodimer. Mg(2+) is required as a cofactor.

The enzyme catalyses hydrogenselenide + ATP + H2O = selenophosphate + AMP + phosphate + 2 H(+). Synthesizes selenophosphate from selenide and ATP. This is Selenide, water dikinase from Cronobacter sakazakii (strain ATCC BAA-894) (Enterobacter sakazakii).